The chain runs to 388 residues: Carbohydrate sulfotransferase 4 (388 aa).

Topologically, residues 1–7 are cytoplasmic; the sequence is MMLLKKG. A helical; Signal-anchor for type II membrane protein transmembrane segment spans residues 8–28; sequence RLLMFLGSQVIVVALFIHMSV. The Lumenal portion of the chain corresponds to 29–388; sequence HRHLSQREES…HILGQVFREG (360 aa). Residues 50–56 and 204–212 each bind 3'-phosphoadenylyl sulfate; these read WRSGSSF and RDPRAVFRS. N-linked (GlcNAc...) asparagine glycans are attached at residues Asn-307, Asn-328, and Asn-369.

Belongs to the sulfotransferase 1 family. Gal/GlcNAc/GalNAc subfamily. In terms of assembly, monomer. In terms of tissue distribution, specifically expressed in high endothelial venules (HEV) of peripheral lymph nodes.

It localises to the golgi apparatus membrane. It catalyses the reaction 3-O-{N-acetyl-beta-D-glucosaminyl-(1-&gt;3)-beta-D-galactosyl-(1-&gt;3)-N-acetyl-alpha-D-galactosaminyl}-L-threonyl-[protein] + 3'-phosphoadenylyl sulfate = 3-O-{6-O-sulfo-N-acetyl-beta-D-glucosaminyl-(1-&gt;3)-beta-D-galactosyl-(1-&gt;3)-N-acetyl-alpha-D-galactosaminyl}-L-threonyl-[protein] + adenosine 3',5'-bisphosphate + H(+). The catalysed reaction is 3-O-{N-acetyl-beta-D-glucosaminyl-(1-&gt;3)-beta-D-galactosyl-(1-&gt;3)-N-acetyl-alpha-D-galactosaminyl}-L-seryl-[protein] + 3'-phosphoadenylyl sulfate = 3-O-{6-O-sulfo-N-acetyl-beta-D-glucosaminyl-(1-&gt;3)-beta-D-galactosyl-(1-&gt;3)-N-acetyl-alpha-D-galactosaminyl}-L-seryl-[protein] + adenosine 3',5'-bisphosphate + H(+). The enzyme catalyses a 3-O-{beta-D-galactosyl-(1-&gt;3)-[N-acetyl-beta-D-glucosaminyl-(1-&gt;6)]-N-acetyl-alpha-D-galactosaminyl}-L-threonyl-[protein] + 3'-phosphoadenylyl sulfate = 3-O-{beta-D-galactosyl-(1-&gt;3)-[6-O-sulfo-N-acetyl-beta-D-glucosaminyl-(1-&gt;6)]-N-acetyl-alpha-D-galactosaminyl}-L-threonyl-[protein] + adenosine 3',5'-bisphosphate + H(+). It carries out the reaction 3-O-{beta-D-galactosyl-(1-&gt;3)-[N-acetyl-beta-D-glucosaminyl-(1-&gt;6)]-N-acetyl-alpha-D-galactosaminyl}-L-seryl-[protein] + 3'-phosphoadenylyl sulfate = 3-O-{beta-D-galactosyl-(1-&gt;3)-[6-O-sulfo-N-acetyl-beta-D-glucosaminyl-(1-&gt;6)]-N-acetyl-alpha-D-galactosaminyl}-L-seryl-[protein] + adenosine 3',5'-bisphosphate + H(+). Its pathway is protein modification; carbohydrate sulfation. In terms of biological role, sulfotransferase involved in SELL/L-selectin ligand biosynthesis pathway. Catalyzes the transfer of the sulfate group from 3'-phospho-5'-adenylyl sulfate (PAPS) onto the hydroxyl group at C-6 position of the non-reducing N-acetylglucosamine (GlcNAc) residue within O-linked mucin-type glycans. Contributes to generate sialyl 6-sulfo Lewis X determinant (also known as MECA-79 epitope) for SELL recognition, a prerequisite for continuous lymphocyte homing into peripheral lymph nodes and antigen immune surveillance. Transfers the sulfate group primarily on core 2 GlcNAcbeta1-6(Galbeta1-3)GalNAcalphaSer/Thr and extended core 1 GlcNAcbeta1-3Galbeta1-3GalNAcalphaSer/Thr based O-linked glycans on CD34 and GLYCAM1 peripheral node addressins (PNAds) expressed on the lumenal side of high endothelial venules (HEVs). The recognition of PNAds by SELL initiates a multistep process comprising tethering and rolling of blood lymphocytes on HEVs against the blood flow, followed by chemokine signaling, integrin-mediated lymphocyte adhesion onto endothelial cells and lymphocyte transendothelial migration. Modulates rolling velocity and differential T and B lymphocyte recruitment into peripheral lymph nodes, with a major role in B lymphocyte homing. Might be redundant in sulfation of MADCAM1 and lymphocyte trafficking to mesenteric lymph nodes. Can also sulfonate core 3 GlcNAcbeta1-3GalNAc-R based glycans as well as GlcNAcbeta1-3Galbeta1-Glc, GlcNAcbeta1-6ManOMe and GlcNAcbeta1-2Man oligosaccharides, which might be ectopically expressed during tumorigenesis. This Mus musculus (Mouse) protein is Carbohydrate sulfotransferase 4 (Chst4).